We begin with the raw amino-acid sequence, 314 residues long: Ribonuclease Z (314 aa).

7 residues coordinate Zn(2+): His62, His64, Asp66, His67, His139, Asp210, and His268. The active-site Proton acceptor is Asp66.

It belongs to the RNase Z family. Homodimer. Zn(2+) is required as a cofactor.

It carries out the reaction Endonucleolytic cleavage of RNA, removing extra 3' nucleotides from tRNA precursor, generating 3' termini of tRNAs. A 3'-hydroxy group is left at the tRNA terminus and a 5'-phosphoryl group is left at the trailer molecule.. Zinc phosphodiesterase, which displays some tRNA 3'-processing endonuclease activity. Probably involved in tRNA maturation, by removing a 3'-trailer from precursor tRNA. The chain is Ribonuclease Z from Rippkaea orientalis (strain PCC 8801 / RF-1) (Cyanothece sp. (strain PCC 8801)).